The primary structure comprises 61 residues: Large ribosomal subunit protein uL30 (61 aa).

The protein belongs to the universal ribosomal protein uL30 family. As to quaternary structure, part of the 50S ribosomal subunit.

The chain is Large ribosomal subunit protein uL30 from Neisseria gonorrhoeae (strain ATCC 700825 / FA 1090).